The following is a 398-amino-acid chain: Isopenicillin N epimerase (398 aa).

Lysine 217 carries the N6-(pyridoxal phosphate)lysine modification.

This sequence belongs to the class-V pyridoxal-phosphate-dependent aminotransferase family. The cofactor is pyridoxal 5'-phosphate.

The enzyme catalyses isopenicillin N = penicillin N. The protein operates within antibiotic biosynthesis; cephalosporin C biosynthesis. In terms of biological role, catalyzes the reversible isomerization between isopenicillin N and penicillin N. The polypeptide is Isopenicillin N epimerase (cefD) (Streptomyces clavuligerus).